We begin with the raw amino-acid sequence, 122 residues long: Large ribosomal subunit protein uL24 (122 aa).

Belongs to the universal ribosomal protein uL24 family. Part of the 50S ribosomal subunit.

Its function is as follows. One of two assembly initiator proteins, it binds directly to the 5'-end of the 23S rRNA, where it nucleates assembly of the 50S subunit. Functionally, located at the polypeptide exit tunnel on the outside of the subunit. This Methanosarcina mazei (strain ATCC BAA-159 / DSM 3647 / Goe1 / Go1 / JCM 11833 / OCM 88) (Methanosarcina frisia) protein is Large ribosomal subunit protein uL24.